The chain runs to 278 residues: Envelope glycoprotein L (278 aa).

Positions 1–30 are cleaved as a signal peptide; it reads MCRRPDCGFSFSPGPVVLLWCCLLLPIVSS. The gL betaherpesvirus-type domain maps to 43 to 256; that stretch reads VPAECPELTR…DKYYAGLPPE (214 aa). A disulfide bond links cysteine 154 and cysteine 159.

The protein belongs to the herpesviridae glycoprotein L (gL) family. Betaherpesvirinae gL subfamily. As to quaternary structure, interacts with glycoprotein H (gH); this interaction is necessary for the correct processing and cell surface expression of gH. Forms the envelope pentamer complex (PC) composed of gH, gL, UL128, UL130, and UL131A. The pentamer interacts with host NRP2. Forms the envelope trimer complex composed of gH, gL, and gO. The trimer interacts with host PDGFRA.

It is found in the virion membrane. The protein localises to the host cell membrane. It localises to the host Golgi apparatus. Its subcellular location is the host trans-Golgi network. Its function is as follows. The heterodimer glycoprotein H-glycoprotein L is required for the fusion of viral and plasma membranes leading to virus entry into the host cell. Acts as a functional inhibitor of gH and maintains gH in an inhibited form. Upon binding to host integrins, gL dissociates from gH leading to activation of the viral fusion glycoproteins gB and gH. In human cytomegalovirus, forms two distincts complexes to mediate viral entry, a trimer and a pentamer at the surface of the virion envelope. The gH-gL-gO trimer is required for infection in fibroblasts by interacting with host PDGFRA. The gH-gL-UL128-UL130-UL131A pentamer is essential for viral entry in epithelial, endothelial and myeloid cells via interaction with host NRP2. The protein is Envelope glycoprotein L of Human cytomegalovirus (strain AD169) (HHV-5).